The following is a 549-amino-acid chain: CTP synthase (549 aa).

An amidoligase domain region spans residues 1 to 272; it reads MPPKSTTTKH…DAYVVRKLDL (272 aa). Ser19 lines the CTP pocket. Ser19 serves as a coordination point for UTP. ATP contacts are provided by residues 20–25 and Asp77; that span reads SLGKGL. Positions 77 and 146 each coordinate Mg(2+). CTP contacts are provided by residues 153–155, 193–198, and Lys229; these read DIE and KTKPTQ. Residues 193-198 and Lys229 contribute to the UTP site; that span reads KTKPTQ. One can recognise a Glutamine amidotransferase type-1 domain in the interval 297 to 548; it reads NLALVGKYID…VKAAVERKTG (252 aa). L-glutamine is bound at residue Gly360. Cys387 serves as the catalytic Nucleophile; for glutamine hydrolysis. L-glutamine is bound by residues 388-391, Glu411, and Arg473; that span reads LGLQ. Catalysis depends on residues His521 and Glu523.

It belongs to the CTP synthase family. Homotetramer.

The enzyme catalyses UTP + L-glutamine + ATP + H2O = CTP + L-glutamate + ADP + phosphate + 2 H(+). The catalysed reaction is L-glutamine + H2O = L-glutamate + NH4(+). It catalyses the reaction UTP + NH4(+) + ATP = CTP + ADP + phosphate + 2 H(+). It participates in pyrimidine metabolism; CTP biosynthesis via de novo pathway; CTP from UDP: step 2/2. Allosterically activated by GTP, when glutamine is the substrate; GTP has no effect on the reaction when ammonia is the substrate. The allosteric effector GTP functions by stabilizing the protein conformation that binds the tetrahedral intermediate(s) formed during glutamine hydrolysis. Inhibited by the product CTP, via allosteric rather than competitive inhibition. Its function is as follows. Catalyzes the ATP-dependent amination of UTP to CTP with either L-glutamine or ammonia as the source of nitrogen. Regulates intracellular CTP levels through interactions with the four ribonucleotide triphosphates. The chain is CTP synthase from Streptomyces avermitilis (strain ATCC 31267 / DSM 46492 / JCM 5070 / NBRC 14893 / NCIMB 12804 / NRRL 8165 / MA-4680).